The primary structure comprises 555 residues: Oligo-1,6-glucosidase (555 aa).

Residue Asp199 is the Nucleophile of the active site. Glu255 serves as the catalytic Proton donor.

It belongs to the glycosyl hydrolase 13 family.

It localises to the cytoplasm. The enzyme catalyses Hydrolysis of (1-&gt;6)-alpha-D-glucosidic linkages in some oligosaccharides produced from starch and glycogen by alpha-amylase, and in isomaltose.. This is Oligo-1,6-glucosidase (malL) from Heyndrickxia coagulans (Weizmannia coagulans).